The primary structure comprises 231 residues: DNA mismatch repair protein MutH (231 aa).

This sequence belongs to the MutH family.

It localises to the cytoplasm. Sequence-specific endonuclease that cleaves unmethylated GATC sequences. It is involved in DNA mismatch repair. The polypeptide is DNA mismatch repair protein MutH (Klebsiella pneumoniae subsp. pneumoniae (strain ATCC 700721 / MGH 78578)).